Consider the following 403-residue polypeptide: Phosphoglycerate kinase (403 aa).

Substrate is bound by residues 21 to 23 (DFN), arginine 36, 59 to 62 (HLGR), arginine 119, and arginine 159. Residues lysine 214, glycine 301, glutamate 332, and 359-362 (GGDS) each bind ATP.

Belongs to the phosphoglycerate kinase family. Monomer.

The protein resides in the cytoplasm. It carries out the reaction (2R)-3-phosphoglycerate + ATP = (2R)-3-phospho-glyceroyl phosphate + ADP. The protein operates within carbohydrate degradation; glycolysis; pyruvate from D-glyceraldehyde 3-phosphate: step 2/5. The polypeptide is Phosphoglycerate kinase (Lactobacillus delbrueckii subsp. lactis).